The primary structure comprises 396 residues: NADH-quinone oxidoreductase subunit D (396 aa).

The protein belongs to the complex I 49 kDa subunit family. In terms of assembly, NDH-1 is composed of 14 different subunits. Subunits NuoB, C, D, E, F, and G constitute the peripheral sector of the complex.

The protein localises to the cell inner membrane. It catalyses the reaction a quinone + NADH + 5 H(+)(in) = a quinol + NAD(+) + 4 H(+)(out). NDH-1 shuttles electrons from NADH, via FMN and iron-sulfur (Fe-S) centers, to quinones in the respiratory chain. The immediate electron acceptor for the enzyme in this species is believed to be ubiquinone. Couples the redox reaction to proton translocation (for every two electrons transferred, four hydrogen ions are translocated across the cytoplasmic membrane), and thus conserves the redox energy in a proton gradient. This Rhodopseudomonas palustris (strain BisB18) protein is NADH-quinone oxidoreductase subunit D.